We begin with the raw amino-acid sequence, 449 residues long: 8-oxoguanine deaminase (449 aa).

Zn(2+)-binding residues include His-64 and His-66. Gln-69 is a binding site for substrate. Residue His-232 coordinates Zn(2+). Substrate-binding residues include Glu-235 and His-269. Zn(2+)-binding residues include His-269 and Asp-320.

Belongs to the metallo-dependent hydrolases superfamily. ATZ/TRZ family. Homodimer. Zn(2+) serves as cofactor.

The enzyme catalyses 8-oxoguanine + H2O + H(+) = urate + NH4(+). It functions in the pathway purine metabolism. Specifically deaminates 8-Oxoguanine (8-oxoG) to uric acid. 8-oxoG is formed via the oxidation of guanine within DNA by reactive oxygen species and leads, if uncorrected, to the incorporation of 8-oxoG:A mismatches and eventually to G:C to T:A transversions. This is 8-oxoguanine deaminase from Pseudomonas aeruginosa (strain ATCC 15692 / DSM 22644 / CIP 104116 / JCM 14847 / LMG 12228 / 1C / PRS 101 / PAO1).